The sequence spans 382 residues: Gap junction alpha-1 protein (382 aa).

The Cytoplasmic segment spans residues 2–23 (GDWSALGKLLDKVQAYSTAGGK). Ser-5 is modified (phosphoserine). The helical transmembrane segment at 24 to 44 (VWLSVLFIFRILLLGTAVESA) threads the bilayer. Topologically, residues 45–76 (WGDEQSAFRCNTQQPGCENVCYDKSFPISHVR) are extracellular. 2 cysteine pairs are disulfide-bonded: Cys-54–Cys-192 and Cys-187–Cys-198. The helical transmembrane segment at 77-97 (FWVLQIIFVSVPTLLYLAHVF) threads the bilayer. The Cytoplasmic portion of the chain corresponds to 98–155 (YVMRKEEKLNKKEEELKVAQTDGANVDMHLKQIEIKKFKYGIEEHGKVKMRGGLLRTY). Residue Lys-144 forms a Glycyl lysine isopeptide (Lys-Gly) (interchain with G-Cter in SUMO) linkage. Residues 156–176 (IISILFKSVFEVAFLLIQWYI) form a helical membrane-spanning segment. The Extracellular segment spans residues 177–207 (YGFSLSAVYTCKRDPCPHQVDCFLSRPTEKT). Residues 208 to 228 (IFIIFMLVVSLVSLALNIIEL) traverse the membrane as a helical segment. The Cytoplasmic portion of the chain corresponds to 229–382 (FYVFFKGIKD…SRPRPDDLEI (154 aa)). Lys-237 is covalently cross-linked (Glycyl lysine isopeptide (Lys-Gly) (interchain with G-Cter in SUMO)). The interaction with NOV stretch occupies residues 244–382 (SDLYHATTGP…SRPRPDDLEI (139 aa)). Tyr-247 carries the phosphotyrosine modification. Residues Ser-255, Ser-257, and Ser-262 each carry the phosphoserine modification. An interaction with UBQLN4 region spans residues 264–382 (TYAYFNGCSS…SRPRPDDLEI (119 aa)). Residue Cys-271 is modified to S-nitrosocysteine. Position 275 is a phosphothreonine (Thr-275). A phosphoserine mark is found at Ser-306 and Ser-314. Positions 317-332 (QNRMGQAGSTISNSHA) are enriched in polar residues. The segment at 317–382 (QNRMGQAGST…SRPRPDDLEI (66 aa)) is disordered. Ser-325 carries the post-translational modification Phosphoserine; by CK1. At Thr-326 the chain carries Phosphothreonine. Residues Ser-328 and Ser-330 each carry the phosphoserine; by CK1 modification. Phosphoserine is present on residues Ser-344 and Ser-365. The segment covering 362–374 (RPSSRASSRASSR) has biased composition (low complexity). Ser-368 is subject to Phosphoserine; by PKC/PRKCG and PKC/PRKCD. 2 positions are modified to phosphoserine: Ser-369 and Ser-373.

It belongs to the connexin family. Alpha-type (group II) subfamily. A connexon is composed of a hexamer of connexins. Interacts with SGSM3. Interacts with RIC1/CIP150. Interacts with CNST and CSNK1D. Interacts (via C-terminus) with TJP1. Interacts (via C-terminus) with SRC (via SH3 domain). Interacts (not ubiquitinated) with UBQLN4 (via UBA domain). Interacts with NOV. Interacts with TMEM65. Interacts with ANK3/ANKG and PKP2. In terms of processing, phosphorylation at Ser-325, Ser-328 and Ser-330 by CK1 modulates gap junction assembly. Phosphorylated at Ser-368 by PRKCG; phosphorylation induces disassembly of gap junction plaques and inhibition of gap junction activity. Phosphorylation at Ser-368 by PRKCD triggers its internalization into small vesicles leading to proteasome-mediated degradation. Post-translationally, sumoylated with SUMO1, SUMO2 and SUMO3, which may regulate the level of functional Cx43 gap junctions at the plasma membrane. May be desumoylated by SENP1 or SENP2. S-nitrosylation at Cys-271 is enriched at the muscle endothelial gap junction in arteries, it augments channel permeability and may regulate of smooth muscle cell to endothelial cell communication. In terms of processing, acetylated in the developing cortex; leading to delocalization from the cell membrane.

It localises to the cell membrane. Its subcellular location is the cell junction. It is found in the gap junction. The protein localises to the endoplasmic reticulum. Gap junction protein that acts as a regulator of bladder capacity. A gap junction consists of a cluster of closely packed pairs of transmembrane channels, the connexons, through which materials of low MW diffuse from one cell to a neighboring cell. May play a critical role in the physiology of hearing by participating in the recycling of potassium to the cochlear endolymph. Negative regulator of bladder functional capacity: acts by enhancing intercellular electrical and chemical transmission, thus sensitizing bladder muscles to cholinergic neural stimuli and causing them to contract. May play a role in cell growth inhibition through the regulation of NOV expression and localization. Plays an essential role in gap junction communication in the ventricles. This chain is Gap junction alpha-1 protein (GJA1), found in Erinaceus europaeus (Western European hedgehog).